The primary structure comprises 263 residues: 4-hydroxy-2-oxo-heptane-1,7-dioate aldolase (263 aa).

Residue His45 is the Proton acceptor of the active site. Gln147 serves as a coordination point for substrate. Position 149 (Glu149) interacts with a divalent metal cation. Residues Ala174 and Asp175 each coordinate substrate. Position 175 (Asp175) interacts with a divalent metal cation.

The protein belongs to the HpcH/HpaI aldolase family. As to quaternary structure, homohexamer; trimer of dimers. Requires a divalent metal cation as cofactor.

It catalyses the reaction 4-hydroxy-2-oxoheptanedioate = succinate semialdehyde + pyruvate. The protein operates within aromatic compound metabolism; 4-hydroxyphenylacetate degradation; pyruvate and succinate semialdehyde from 4-hydroxyphenylacetate: step 7/7. Functionally, catalyzes the reversible retro-aldol cleavage of 4-hydroxy-2-ketoheptane-1,7-dioate (HKHD) to pyruvate and succinic semialdehyde. This chain is 4-hydroxy-2-oxo-heptane-1,7-dioate aldolase, found in Salmonella heidelberg (strain SL476).